The primary structure comprises 249 residues: Chitooligosaccharide deacetylase (249 aa).

Residues H61 and H125 each contribute to the Mg(2+) site.

This sequence belongs to the YdjC deacetylase family. ChbG subfamily. As to quaternary structure, homodimer. Requires Mg(2+) as cofactor.

Its subcellular location is the cytoplasm. The enzyme catalyses N,N'-diacetylchitobiose + H2O = N-acetyl-beta-D-glucosaminyl-(1-&gt;4)-D-glucosamine + acetate. The catalysed reaction is diacetylchitobiose-6'-phosphate + H2O = N'-monoacetylchitobiose-6'-phosphate + acetate. It participates in glycan degradation; chitin degradation. Functionally, involved in the degradation of chitin. ChbG is essential for growth on the acetylated chitooligosaccharides chitobiose and chitotriose but is dispensable for growth on cellobiose and chitosan dimer, the deacetylated form of chitobiose. Deacetylation of chitobiose-6-P and chitotriose-6-P is necessary for both the activation of the chb promoter by the regulatory protein ChbR and the hydrolysis of phosphorylated beta-glucosides by the phospho-beta-glucosidase ChbF. Catalyzes the removal of only one acetyl group from chitobiose-6-P to yield monoacetylchitobiose-6-P, the inducer of ChbR and the substrate of ChbF. In Escherichia coli (strain K12 / MC4100 / BW2952), this protein is Chitooligosaccharide deacetylase.